Reading from the N-terminus, the 33-residue chain is DNA-directed RNA polymerase subunit beta' (33 aa).

Belongs to the RNA polymerase beta' chain family. RpoC1 subfamily. In terms of assembly, in plastids the minimal PEP RNA polymerase catalytic core is composed of four subunits: alpha, beta, beta', and beta''. When a (nuclear-encoded) sigma factor is associated with the core the holoenzyme is formed, which can initiate transcription.

It localises to the plastid. Its subcellular location is the chloroplast. The enzyme catalyses RNA(n) + a ribonucleoside 5'-triphosphate = RNA(n+1) + diphosphate. Functionally, DNA-dependent RNA polymerase catalyzes the transcription of DNA into RNA using the four ribonucleoside triphosphates as substrates. The protein is DNA-directed RNA polymerase subunit beta' (rpoC1) of Heterosigma akashiwo (Chromophytic alga).